A 226-amino-acid chain; its full sequence is 7-cyano-7-deazaguanine synthase (226 aa).

Residue 8-18 (LSGGLDSTTTL) participates in ATP binding. The Zn(2+) site is built by cysteine 188, cysteine 198, cysteine 201, and cysteine 204.

It belongs to the QueC family. Requires Zn(2+) as cofactor.

It catalyses the reaction 7-carboxy-7-deazaguanine + NH4(+) + ATP = 7-cyano-7-deazaguanine + ADP + phosphate + H2O + H(+). It functions in the pathway purine metabolism; 7-cyano-7-deazaguanine biosynthesis. Catalyzes the ATP-dependent conversion of 7-carboxy-7-deazaguanine (CDG) to 7-cyano-7-deazaguanine (preQ(0)). This is 7-cyano-7-deazaguanine synthase from Nitrosomonas eutropha (strain DSM 101675 / C91 / Nm57).